Consider the following 455-residue polypeptide: Ribosomal protein uS12 methylthiotransferase RimO (455 aa).

The MTTase N-terminal domain occupies 30-140 (PTIGMVSLGC…VLDAVHGAVP (111 aa)). Residues cysteine 39, cysteine 75, cysteine 104, cysteine 171, cysteine 175, and cysteine 178 each contribute to the [4Fe-4S] cluster site. Positions 157–386 (LTPRHFSYLK…MEKAQAISEA (230 aa)) constitute a Radical SAM core domain. Residues 389–455 (AAKVGRRIEV…GEYDLWGRPV (67 aa)) enclose the TRAM domain.

It belongs to the methylthiotransferase family. RimO subfamily. [4Fe-4S] cluster serves as cofactor.

It is found in the cytoplasm. It catalyses the reaction L-aspartate(89)-[ribosomal protein uS12]-hydrogen + (sulfur carrier)-SH + AH2 + 2 S-adenosyl-L-methionine = 3-methylsulfanyl-L-aspartate(89)-[ribosomal protein uS12]-hydrogen + (sulfur carrier)-H + 5'-deoxyadenosine + L-methionine + A + S-adenosyl-L-homocysteine + 2 H(+). In terms of biological role, catalyzes the methylthiolation of an aspartic acid residue of ribosomal protein uS12. The polypeptide is Ribosomal protein uS12 methylthiotransferase RimO (Cereibacter sphaeroides (strain ATCC 17029 / ATH 2.4.9) (Rhodobacter sphaeroides)).